The chain runs to 1046 residues: UDP-N-acetylglucosamine--peptide N-acetylglucosaminyltransferase 110 kDa subunit (1046 aa).

N-acetylalanine is present on Ala-2. Ser-3 and Ser-4 each carry phosphoserine; by GSK3-beta; alternate. Residues Ser-3 and Ser-4 are each glycosylated (O-linked (GlcNAc) serine; alternate). Asp-10 is a glycosylation site (O-linked (GlcNAc) serine). O-linked (GlcNAc) threonine glycosylation is present at Thr-12. Met-18 is a glycosylation site (O-linked (GlcNAc) serine). Ser-20 bears the Phosphoserine mark. The TPR 1 repeat unit spans residues 21-54; sequence FQGLAELAHREYQAGDFEAAERHCMQLWRQEPDN. Glu-38 is a glycosylation site (O-linked (GlcNAc) threonine). Residues Pro-52 and Gly-56 are each glycosylated (O-linked (GlcNAc) serine). TPR repeat units follow at residues 89 to 122, 123 to 156, 157 to 190, 191 to 224, 225 to 258, 259 to 292, 293 to 326, 327 to 360, 361 to 394, 395 to 428, and 429 to 462; these read AEAY…KPDF, IDGY…NPDL, YCVR…QPNF, AVAW…DPNF, LDAY…SPNH, AVVH…QPHF, PDAY…CPTH, ADSL…FPEF, AAAH…SPTF, ADAY…NPAF, and ADAH…KPDF. Ser-399 is a glycosylation site (O-linked (GlcNAc) serine; by autocatalysis). Thr-454 carries the phosphothreonine; by AMPK modification. One copy of the TPR 13; truncated repeat lies at 463–473; it reads PDAYCNLAHCL. The short motif at 464-466 is the DFP motif element; the sequence is DAY. The Nuclear localization signal signature appears at 487–503; sequence KKLVSIVADQLEKNRLP. His-508 functions as the Proton acceptor in the catalytic mechanism. UDP-binding positions include Gln-849, Lys-852, 906–908, 911–914, 930–932, and Asp-935; these read APK, HVRR, and HTT. At Tyr-989 the chain carries Phosphotyrosine. The interval 991–1010 is required for phosphatidylinositol 3,4,5-triphosphate binding; the sequence is KKVRGKVWKQRISSPLFNTK.

It belongs to the glycosyltransferase 41 family. O-GlcNAc transferase subfamily. As to quaternary structure, monomer; may exist in different oligomerization states in cells. Homotrimer, oligomerizes via TPR repeats 6 and 7. Trimerization is not necessary for activity in vitro, however it increases affinity for UDP-GlcNAc. Component of a THAP1/THAP3-HCFC1-OGT complex. Component of the NSL complex at least composed of MOF/KAT8, KANSL1, KANSL2, KANSL3, MCRS1, PHF20, OGT1/OGT, WDR5 and HCFC1. Found in a complex with KIF5B, RHOT1, RHOT2 and TRAK1. Found in a complex composed of at least SINHCAF, SIN3A, HDAC1, SAP30, RBBP4, OGT and TET1. Component of a complex composed of KMT2E/MLL5 (isoform 3), OGT (isoform 1) and USP7; the complex stabilizes KMT2E/MLL5, preventing KMT2E/MLL5 ubiquitination and proteasomal-mediated degradation. Interacts (via TPRs 1-6) with SIN3A; the interaction mediates transcriptional repression in parallel with histone deacetylase. Interacts (via TPR 5-6) with TET1, TET2 and TET3. Interacts (via TPR repeats 6 and 7) with ATXN10. Interacts with NSD2. Interacts with PROSER1; this interaction mediates TET2 O-GlcNAcylation and stability by promoting the interaction between OGT and TET2. In terms of assembly, interacts with USP7. (Microbial infection) Interacts with human T-cell leukemia virus 1/HTLV-1 protein Tax; this interaction increases Tax interacting partner CREB1 O-GlcNAcylation. Ubiquitinated by the SCF(FBXO31) complex, leading to its proteasomal degradation. In terms of processing, phosphorylation on Ser-3 or Ser-4 by GSK3-beta positively regulates its activity. Phosphorylation at Thr-454 by AMPK promotes nuclear localization. Post-translationally, glycosylated via autocatalysis; O-GlcNAcylation at Ser-399 promotes nuclear localization. Glycosylated via autocatalysis; does not affect the enzyme activity but regulates substrate selectivity. As to expression, highly expressed in pancreas and to a lesser extent in skeletal muscle, heart, brain and placenta. Present in trace amounts in lung and liver.

Its subcellular location is the nucleus. The protein localises to the cytoplasm. It is found in the mitochondrion. The protein resides in the membrane. It localises to the cell membrane. Its subcellular location is the mitochondrion membrane. The protein localises to the cell projection. The catalysed reaction is L-seryl-[protein] + UDP-N-acetyl-alpha-D-glucosamine = 3-O-(N-acetyl-beta-D-glucosaminyl)-L-seryl-[protein] + UDP + H(+). The enzyme catalyses L-threonyl-[protein] + UDP-N-acetyl-alpha-D-glucosamine = 3-O-(N-acetyl-beta-D-glucosaminyl)-L-threonyl-[protein] + UDP + H(+). It functions in the pathway protein modification; protein glycosylation. Subject to product inhibition by UDP. Catalyzes the transfer of a single N-acetylglucosamine from UDP-GlcNAc to a serine or threonine residue in cytoplasmic and nuclear proteins resulting in their modification with a beta-linked N-acetylglucosamine (O-GlcNAc). Glycosylates a large and diverse number of proteins including histone H2B, AKT1, AMPK, ATG4B, CAPRIN1, EZH2, FNIP1, GSDMD, KRT7, LMNA, LMNB1, LMNB2, RPTOR, HOXA1, PFKL, KMT2E/MLL5, MAPT/TAU, TET2, RBL2, RET, NOD2 and HCFC1. Can regulate their cellular processes via cross-talk between glycosylation and phosphorylation or by affecting proteolytic processing. Involved in insulin resistance in muscle and adipocyte cells via glycosylating insulin signaling components and inhibiting the 'Thr-308' phosphorylation of AKT1, enhancing IRS1 phosphorylation and attenuating insulin signaling. Involved in glycolysis regulation by mediating glycosylation of 6-phosphofructokinase PFKL, inhibiting its activity. Plays a key role in chromatin structure by mediating O-GlcNAcylation of 'Ser-112' of histone H2B: recruited to CpG-rich transcription start sites of active genes via its interaction with TET proteins (TET1, TET2 or TET3). As part of the NSL complex indirectly involved in acetylation of nucleosomal histone H4 on several lysine residues. O-GlcNAcylation of 'Ser-75' of EZH2 increases its stability, and facilitating the formation of H3K27me3 by the PRC2/EED-EZH2 complex. Stabilizes KMT2E/MLL5 by mediating its glycosylation, thereby preventing KMT2E/MLL5 ubiquitination. Regulates circadian oscillation of the clock genes and glucose homeostasis in the liver. Stabilizes clock proteins BMAL1 and CLOCK through O-glycosylation, which prevents their ubiquitination and subsequent degradation. Promotes the CLOCK-BMAL1-mediated transcription of genes in the negative loop of the circadian clock such as PER1/2 and CRY1/2. O-glycosylates HCFC1 and regulates its proteolytic processing and transcriptional activity. Component of a THAP1/THAP3-HCFC1-OGT complex that is required for the regulation of the transcriptional activity of RRM1. Regulates mitochondrial motility in neurons by mediating glycosylation of TRAK1. Promotes autophagy by mediating O-glycosylation of ATG4B. Acts as a regulator of mTORC1 signaling by mediating O-glycosylation of RPTOR and FNIP1: O-GlcNAcylation of RPTOR in response to glucose sufficiency promotes activation of the mTORC1 complex. Its function is as follows. The mitochondrial isoform (mOGT) is cytotoxic and triggers apoptosis in several cell types including INS1, an insulinoma cell line. In terms of biological role, has N-acetylglucosaminyltransferase activity: glycosylates proteins, such as HNRNPU, NEUROD1, NUP62 and PDCD6IP. Displays specific substrate selectivity compared to other isoforms. This is UDP-N-acetylglucosamine--peptide N-acetylglucosaminyltransferase 110 kDa subunit from Homo sapiens (Human).